Reading from the N-terminus, the 439-residue chain is Alpha-1,3-mannosyl-glycoprotein 4-beta-N-acetylglucosaminyltransferase-like protein MGAT4E (439 aa).

It functions in the pathway protein modification; protein glycosylation. In terms of biological role, glycosyltransferase-like protein that may participate in the transfer of N-acetylglucosamine (GlcNAc) to the core mannose residues of N-linked glycans. The protein is Alpha-1,3-mannosyl-glycoprotein 4-beta-N-acetylglucosaminyltransferase-like protein MGAT4E of Mus musculus (Mouse).